We begin with the raw amino-acid sequence, 208 residues long: Adenylyl-sulfate kinase (208 aa).

35–42 (GLSGSGKS) serves as a coordination point for ATP. Catalysis depends on S109, which acts as the Phosphoserine intermediate.

This sequence belongs to the APS kinase family.

The enzyme catalyses adenosine 5'-phosphosulfate + ATP = 3'-phosphoadenylyl sulfate + ADP + H(+). Its pathway is sulfur metabolism; hydrogen sulfide biosynthesis; sulfite from sulfate: step 2/3. Its function is as follows. Catalyzes the synthesis of activated sulfate. In Geotalea uraniireducens (strain Rf4) (Geobacter uraniireducens), this protein is Adenylyl-sulfate kinase.